The following is a 99-amino-acid chain: Sec-independent protein translocase protein TatA (99 aa).

A helical transmembrane segment spans residues 1–21 (MIGNLKPLEIVLIIAVILLLF). A disordered region spans residues 46-99 (AMKKDDAATAAPTTETVADDTVPPQSTTARTIQAAPGDVTSSRPVSEAKPTTQS). The segment covering 53–69 (ATAAPTTETVADDTVPP) has biased composition (low complexity). Positions 84-99 (VTSSRPVSEAKPTTQS) are enriched in polar residues.

It belongs to the TatA/E family. In terms of assembly, the Tat system comprises two distinct complexes: a TatABC complex, containing multiple copies of TatA, TatB and TatC subunits, and a separate TatA complex, containing only TatA subunits. Substrates initially bind to the TatABC complex, which probably triggers association of the separate TatA complex to form the active translocon.

The protein resides in the cell membrane. Its function is as follows. Part of the twin-arginine translocation (Tat) system that transports large folded proteins containing a characteristic twin-arginine motif in their signal peptide across membranes. TatA could form the protein-conducting channel of the Tat system. This Streptomyces griseus subsp. griseus (strain JCM 4626 / CBS 651.72 / NBRC 13350 / KCC S-0626 / ISP 5235) protein is Sec-independent protein translocase protein TatA.